Consider the following 160-residue polypeptide: Ribosomal RNA large subunit methyltransferase H (160 aa).

S-adenosyl-L-methionine contacts are provided by residues leucine 76, glycine 108, and 127–132 (LGKMTW).

It belongs to the RNA methyltransferase RlmH family. In terms of assembly, homodimer.

It is found in the cytoplasm. It catalyses the reaction pseudouridine(1915) in 23S rRNA + S-adenosyl-L-methionine = N(3)-methylpseudouridine(1915) in 23S rRNA + S-adenosyl-L-homocysteine + H(+). Its function is as follows. Specifically methylates the pseudouridine at position 1915 (m3Psi1915) in 23S rRNA. In Rhizobium etli (strain CIAT 652), this protein is Ribosomal RNA large subunit methyltransferase H.